The chain runs to 153 residues: Acetylacetone-cleaving enzyme (153 aa).

In terms of assembly, homotetramer. The cofactor is Fe cation.

The enzyme catalyses acetylacetone + O2 = methylglyoxal + acetate + H(+). Its pathway is xenobiotic degradation; acetylacetone degradation. In terms of biological role, cleaves acetylacetone to equimolar amounts of methylglyoxal and acetate, consuming one equivalent of molecular oxygen. The chain is Acetylacetone-cleaving enzyme (dke1) from Acinetobacter johnsonii.